The chain runs to 359 residues: Photosystem II protein D1 1 (359 aa).

Helical transmembrane passes span 29–46, 118–133, and 142–156; these read YVGW…AATI, HFLI…EWEL, and WICV…AASA. Histidine 118 provides a ligand contact to chlorophyll a. Residue tyrosine 126 coordinates pheophytin a. Positions 170 and 189 each coordinate [CaMn4O5] cluster. Residues 197 to 218 form a helical membrane-spanning segment; it reads FHMLGVAGVFGGSLFSAMHGSL. Residue histidine 198 coordinates chlorophyll a. Residues histidine 215 and 264–265 contribute to the a quinone site; that span reads SF. Histidine 215 is a Fe cation binding site. Histidine 272 is a Fe cation binding site. A helical membrane pass occupies residues 274 to 288; sequence FLAAWPVVGIWFTAL. 4 residues coordinate [CaMn4O5] cluster: histidine 332, glutamate 333, aspartate 342, and alanine 344. A propeptide spanning residues 345–359 is cleaved from the precursor; it reads AAESTPVALQAPAIG.

This sequence belongs to the reaction center PufL/M/PsbA/D family. In terms of assembly, PSII is composed of 1 copy each of membrane proteins PsbA, PsbB, PsbC, PsbD, PsbE, PsbF, PsbH, PsbI, PsbJ, PsbK, PsbL, PsbM, PsbT, PsbX, PsbY, PsbZ, Psb30/Ycf12, peripheral proteins PsbO, CyanoQ (PsbQ), PsbU, PsbV and a large number of cofactors. It forms dimeric complexes. It depends on The D1/D2 heterodimer binds P680, chlorophylls that are the primary electron donor of PSII, and subsequent electron acceptors. It shares a non-heme iron and each subunit binds pheophytin, quinone, additional chlorophylls, carotenoids and lipids. D1 provides most of the ligands for the Mn4-Ca-O5 cluster of the oxygen-evolving complex (OEC). There is also a Cl(-1) ion associated with D1 and D2, which is required for oxygen evolution. The PSII complex binds additional chlorophylls, carotenoids and specific lipids. as a cofactor. Post-translationally, tyr-161 forms a radical intermediate that is referred to as redox-active TyrZ, YZ or Y-Z. C-terminally processed by CtpA; processing is essential to allow assembly of the oxygen-evolving complex and thus photosynthetic growth.

It localises to the cellular thylakoid membrane. The catalysed reaction is 2 a plastoquinone + 4 hnu + 2 H2O = 2 a plastoquinol + O2. Functionally, photosystem II (PSII) is a light-driven water:plastoquinone oxidoreductase that uses light energy to abstract electrons from H(2)O, generating O(2) and a proton gradient subsequently used for ATP formation. It consists of a core antenna complex that captures photons, and an electron transfer chain that converts photonic excitation into a charge separation. The D1/D2 (PsbA/PsbD) reaction center heterodimer binds P680, the primary electron donor of PSII as well as several subsequent electron acceptors. This chain is Photosystem II protein D1 1, found in Parasynechococcus marenigrum (strain WH8102).